Here is a 99-residue protein sequence, read N- to C-terminus: Protein translation factor SUI1 homolog (99 aa).

This sequence belongs to the SUI1 family.

In Picrophilus torridus (strain ATCC 700027 / DSM 9790 / JCM 10055 / NBRC 100828 / KAW 2/3), this protein is Protein translation factor SUI1 homolog.